The sequence spans 346 residues: Short-wave-sensitive opsin 1 (346 aa).

Residues 1–31 (MSGEDDFYLFQNISSVGPWDGPQYHLAPVWA) lie on the Extracellular side of the membrane. N12 carries an N-linked (GlcNAc...) asparagine glycan. A helical transmembrane segment spans residues 32 to 56 (FRLQAAFMGFVFFVGTPLNAIVLVA). The Cytoplasmic segment spans residues 57–68 (TLHYKKLRQPLN). The chain crosses the membrane as a helical span at residues 69 to 94 (YILVNVSLGGFLFCIFSVFTVFIASC). Over 95 to 108 (HGYFLFGRHVCALE) the chain is Extracellular. The cysteines at positions 105 and 182 are disulfide-linked. Residues 109-128 (AFLGSVAGLVTGWSLAFLAF) traverse the membrane as a helical segment. Residues 129–147 (ERYVVICKPFGSIRFNSKH) are Cytoplasmic-facing. Residues 148–171 (ALMVVLATWIIGIGVSIPPFFGWS) form a helical membrane-spanning segment. At 172 to 197 (RFIPEGLQCSCGPDWYTVGTKYRSEY) the chain is on the extracellular side. A helical membrane pass occupies residues 198 to 225 (YTWFLFIFCFIIPLSLICFSYSQLLRTL). At 226 to 247 (RAVAAQQQESATTQKAEREVSH) the chain is on the cytoplasmic side. A helical membrane pass occupies residues 248-271 (MVVVMVGSFCLCYVPYAALAMYMV). Residues 272 to 279 (NNRNHGLD) lie on the Extracellular side of the membrane. The chain crosses the membrane as a helical span at residues 280-304 (LRLVTIPAFFSKSSCVYNPIIYCFM). Residue K291 is modified to N6-(retinylidene)lysine. Residues 305-346 (NKQFRACILEMVCRKPMADESDVSGSQKTEVSTVSSSKVGPH) are Cytoplasmic-facing. Residues 324-346 (ESDVSGSQKTEVSTVSSSKVGPH) form a disordered region. Positions 330 to 346 (SQKTEVSTVSSSKVGPH) are enriched in low complexity.

This sequence belongs to the G-protein coupled receptor 1 family. Opsin subfamily. Post-translationally, phosphorylated on some or all of the serine and threonine residues present in the C-terminal region. As to expression, expressed in the inner and outer segments of cone photoreceptor cells in the retina (at protein level).

Its subcellular location is the cell membrane. The protein resides in the photoreceptor inner segment. It localises to the cell projection. The protein localises to the cilium. It is found in the photoreceptor outer segment. Its subcellular location is the cytoplasm. The protein resides in the perinuclear region. In terms of biological role, visual pigments are the light-absorbing molecules that mediate vision. They consist of an apoprotein, opsin, covalently linked to cis-retinal. Required for the maintenance of cone outer segment organization in the ventral retina, but not essential for the maintenance of functioning cone photoreceptors. Involved in ensuring correct abundance and localization of retinal membrane proteins. May increase spectral sensitivity in dim light. The protein is Short-wave-sensitive opsin 1 (Opn1sw) of Mus musculus (Mouse).